The chain runs to 210 residues: Na(+)-translocating NADH-quinone reductase subunit D (210 aa).

A run of 6 helical transmembrane segments spans residues 14–34, 42–62, 72–92, 103–123, 131–151, and 178–198; these read PIVNNNPIALQVLGVCSALAV, LVMALALTAVTAFSNLFISMI, IIVQMTIIASLVIVVDQLLQA, VFVGLIITNCIVMGRAEAYAM, FMDGIGNGLGYGAILLAVGFV, and NGLLLLPPSAFFLIGVLIWII.

This sequence belongs to the NqrDE/RnfAE family. In terms of assembly, composed of six subunits; NqrA, NqrB, NqrC, NqrD, NqrE and NqrF.

The protein resides in the cell inner membrane. The catalysed reaction is a ubiquinone + n Na(+)(in) + NADH + H(+) = a ubiquinol + n Na(+)(out) + NAD(+). Its function is as follows. NQR complex catalyzes the reduction of ubiquinone-1 to ubiquinol by two successive reactions, coupled with the transport of Na(+) ions from the cytoplasm to the periplasm. NqrA to NqrE are probably involved in the second step, the conversion of ubisemiquinone to ubiquinol. The chain is Na(+)-translocating NADH-quinone reductase subunit D from Shewanella baltica (strain OS223).